Reading from the N-terminus, the 221-residue chain is Ras-related protein Rab-28 (221 aa).

Ser2 is modified (N-acetylserine). Position 8 is a phosphoserine (Ser8). Residues Gly21, Gly24, Lys25, Thr26, Ser27, Gly38, Lys39, Tyr41, and Thr44 each coordinate GTP. Thr26 provides a ligand contact to Mg(2+). Residues 35-49 form a switch I region; that stretch reads ETFGKQYKQTIGLDF. 2 residues coordinate Mg(2+): Thr44 and Asp68. Residues 68-85 form a switch II region; sequence DIGGQTIGGKMLDKYIYG. The GTP site is built by Gly71, Asn129, Lys130, Asp132, Ala160, and Lys161. The residue at position 218 (Cys218) is a Cysteine methyl ester. Residue Cys218 is the site of S-farnesyl cysteine attachment. The propeptide at 219-221 is removed in mature form; the sequence is AVQ.

This sequence belongs to the small GTPase superfamily. Rab family. In terms of assembly, interacts (prenylated form) with PDE6D; the interaction promotes RAB28 delivery to the photoreceptor outer segments. Interacts with KCNJ13; the interaction may facilitate cone outer segments phagocytosis. Interacts with RELA; the interaction contributes to RELA transport from cytoplasm to nucleus. Requires Mg(2+) as cofactor. Isoprenylated. Testis, brain, and to much lower levels heart, skeletal muscle and fat cells. Expressed in the retina.

The protein resides in the cell membrane. It localises to the cytoplasm. The protein localises to the cytoskeleton. Its subcellular location is the cilium basal body. It is found in the nucleus. It carries out the reaction GTP + H2O = GDP + phosphate + H(+). With respect to regulation, regulated by guanine nucleotide exchange factors (GEFs) which promote the exchange of bound GDP for free GTP. Regulated by GTPase activating proteins (GAPs) which increase the GTP hydrolysis activity. Inhibited by GDP dissociation inhibitors (GDIs). Functionally, the small GTPases Rab are key regulators of intracellular membrane trafficking, from the formation of transport vesicles to their fusion with membranes. Rabs cycle between an inactive GDP-bound form and an active GTP-bound form that is able to recruit to membranes different sets of downstream effectors directly responsible for vesicle formation, movement, tethering and fusion. RAB28 is required for shedding and phagocytosis of cone cell outer segments (OS) discs in the retina. Also participates in nuclear factor kappa-B p65/RELA nuclear transport in endothelial cells. This is Ras-related protein Rab-28 from Rattus norvegicus (Rat).